A 106-amino-acid polypeptide reads, in one-letter code: Nucleoid-associated protein XCV1128 (106 aa).

A disordered region spans residues 81–106 (IDAESKDRMGSATAGMQLPPGMKLPF).

The protein belongs to the YbaB/EbfC family. In terms of assembly, homodimer.

It localises to the cytoplasm. The protein localises to the nucleoid. Functionally, binds to DNA and alters its conformation. May be involved in regulation of gene expression, nucleoid organization and DNA protection. This is Nucleoid-associated protein XCV1128 from Xanthomonas euvesicatoria pv. vesicatoria (strain 85-10) (Xanthomonas campestris pv. vesicatoria).